Here is a 155-residue protein sequence, read N- to C-terminus: uncharacterized protein (155 aa).

The HTH asnC-type domain maps to 4–65; that stretch reads IDEVDEIILR…IIDHSFLGEF (62 aa). Positions 23–42 form a DNA-binding region, H-T-H motif; sequence LTELSRKVGLTPAAIKNRVE.

This is an uncharacterized protein from Pyrococcus furiosus (strain ATCC 43587 / DSM 3638 / JCM 8422 / Vc1).